A 371-amino-acid polypeptide reads, in one-letter code: Galanin receptor type 2 (371 aa).

Topologically, residues 1–27 are extracellular; it reads MNGSDSQGAEDSSQEGGGGWQPEAVLV. N2 is a glycosylation site (N-linked (GlcNAc...) asparagine). The chain crosses the membrane as a helical span at residues 28–48; that stretch reads PLFFALIFLVGAVGNALVLAV. The Cytoplasmic portion of the chain corresponds to 49-59; it reads LLRGGQAVSTT. A helical membrane pass occupies residues 60-80; the sequence is NLFILNLGVADLCFILCCVPF. At 81 to 98 the chain is on the extracellular side; the sequence is QATIYTLDDWVFGSLLCK. An intrachain disulfide couples C97 to C174. Residues 99-120 traverse the membrane as a helical segment; it reads AVHFLIFLTMHASSFTLAAVSL. At 121 to 140 the chain is on the cytoplasmic side; it reads DRYLAIRYPLHSRELRTPRN. A helical membrane pass occupies residues 141–161; it reads ALAAIGLIWGLALLFSGPYLS. At 162-186 the chain is on the extracellular side; it reads YYSQSQLANLTVCHPAWSAPRRRAM. A helical transmembrane segment spans residues 187–207; it reads DLCTFVFSYLLPVLVLSLTYA. Residues 208–236 are Cytoplasmic-facing; that stretch reads RTLHYLWRTVDPVAAGSGSQRAKRKVTRM. A helical transmembrane segment spans residues 237 to 257; that stretch reads IVIVAVLFCLCWMPHHALILC. At 258-259 the chain is on the extracellular side; it reads VW. Residues 260–280 form a helical membrane-spanning segment; sequence FGRFPLTRATYALRILSHLVS. The Cytoplasmic portion of the chain corresponds to 281-371; it reads YANSCVNPIV…TLSRTLDPAC (91 aa).

It belongs to the G-protein coupled receptor 1 family.

It is found in the cell membrane. In terms of biological role, receptor for the hormone galanin, GALP and spexin-1. The activity of this receptor is mediated by G proteins that activate the phospholipase C/protein kinase C pathway (via G(q)) and that inhibit adenylyl cyclase (via G(i)). This is Galanin receptor type 2 (Galr2) from Mus musculus (Mouse).